Consider the following 127-residue polypeptide: Fluoride-specific ion channel FluC (127 aa).

Helical transmembrane passes span 4–24 (WFWIGLGGAAGTLARYGLSTW) and 36–56 (GTLAVNVIGSFLLGAIGEIAA). Na(+)-binding residues include glycine 75 and threonine 78. A helical membrane pass occupies residues 100-120 (LANIAITLVVCLLAGVLGMVV).

The protein belongs to the fluoride channel Fluc/FEX (TC 1.A.43) family.

Its subcellular location is the cell inner membrane. It catalyses the reaction fluoride(in) = fluoride(out). With respect to regulation, na(+) is not transported, but it plays an essential structural role and its presence is essential for fluoride channel function. Its function is as follows. Fluoride-specific ion channel. Important for reducing fluoride concentration in the cell, thus reducing its toxicity. The sequence is that of Fluoride-specific ion channel FluC from Sorangium cellulosum (strain So ce56) (Polyangium cellulosum (strain So ce56)).